A 284-amino-acid chain; its full sequence is N-acylphosphatidylethanolamine synthase (284 aa).

The chain crosses the membrane as a helical span at residues Thr21–Cys37. An HXXXXD motif motif is present at residues His67 to Asp72. Residues Gly122–Trp163 are hydrophilic.

It belongs to the taffazin family. Essentially present in young tissues. Expressed in roots, cotyledons, leaves, and shoot and root apical meristems.

The protein resides in the cell membrane. In terms of biological role, acyltransferase that catalyzes the N-acylation of phosphatidylethanolamine to form N-acylphosphatidylethanolamine (N-acyl-PE) (e.g. NAPEs containing C16:0, C16:1, C18:0, and C18:1). Also mediates the formation of acylphosphatidylglycerol (acyl-PG) from lysoglycerophospholipid by O-acylation. Uses acyl-CoA as acyl donors. Acylates 1-acyllysophosphatidylethanolamine (1-acyllyso-PE) and 1-acyllysophosphatidylglycerol (1-acyllyso-PG) at the sn-2-position. This is N-acylphosphatidylethanolamine synthase from Arabidopsis thaliana (Mouse-ear cress).